Here is a 517-residue protein sequence, read N- to C-terminus: Zinc finger protein 215 (517 aa).

The region spanning 48–126 (RQKFRHFQYL…KDMVTLIEDV (79 aa)) is the SCAN box domain. In terms of domain architecture, KRAB spans 164-237 (VTFKDVVVEF…EKEIPRKTIF (74 aa)). C2H2-type zinc fingers lie at residues 379–401 (YECY…QIIH), 407–429 (YKCS…QKLH), 462–484 (YQCV…QMIH), and 490–512 (FKCK…QKLH).

This sequence belongs to the krueppel C2H2-type zinc-finger protein family.

The protein localises to the nucleus. May be involved in transcriptional regulation. This chain is Zinc finger protein 215 (ZNF215), found in Homo sapiens (Human).